A 742-amino-acid chain; its full sequence is 5-methyltetrahydropteroyltriglutamate--homocysteine methyltransferase (742 aa).

Residues 18–21 (REWK) and Lys-112 each bind 5-methyltetrahydropteroyltri-L-glutamate. L-homocysteine is bound by residues 420–422 (IGS) and Glu-473. L-methionine-binding positions include 420 to 422 (IGS) and Glu-473. Trp-550 serves as a coordination point for 5-methyltetrahydropteroyltri-L-glutamate. Asp-588 contributes to the L-homocysteine binding site. Asp-588 lines the L-methionine pocket. Glu-594 contacts 5-methyltetrahydropteroyltri-L-glutamate. Zn(2+) contacts are provided by His-630, Cys-632, and Glu-654. The active-site Proton donor is the His-683. Cys-715 contacts Zn(2+).

This sequence belongs to the vitamin-B12 independent methionine synthase family. The cofactor is Zn(2+).

The enzyme catalyses 5-methyltetrahydropteroyltri-L-glutamate + L-homocysteine = tetrahydropteroyltri-L-glutamate + L-methionine. It functions in the pathway amino-acid biosynthesis; L-methionine biosynthesis via de novo pathway; L-methionine from L-homocysteine (MetE route): step 1/1. In terms of biological role, catalyzes the transfer of a methyl group from 5-methyltetrahydrofolate to homocysteine resulting in methionine formation. In Staphylococcus aureus (strain USA300), this protein is 5-methyltetrahydropteroyltriglutamate--homocysteine methyltransferase.